The primary structure comprises 178 residues: MKILLDFLPIVLFFGSYKLYGIYVATAVLMAATALQMALIYAIDRRLQTMHKVTLALILSFGALTLALQDDRFIKWKPTVLYGAMSVALALTLWALKKNFLKLLLGSQLALPDMVWLRLNWAWIAYCAFMSAINAYVVLHWSTDAWVDFKLWGYVFPLVFLIGQGLYIAPHLKNQGRT.

The next 5 membrane-spanning stretches (helical) occupy residues 10–30, 47–67, 76–96, 121–141, and 151–171; these read IVLF…AVLM, LQTM…LTLA, WKPT…LWAL, WAWI…VLHW, and LWGY…IAPH.

The protein belongs to the YciB family.

The protein resides in the cell inner membrane. Functionally, plays a role in cell envelope biogenesis, maintenance of cell envelope integrity and membrane homeostasis. This chain is Inner membrane-spanning protein YciB, found in Verminephrobacter eiseniae (strain EF01-2).